A 910-amino-acid polypeptide reads, in one-letter code: MLEKTYDAAATEPKIAERWEEAGAFKAGAGAKPGADPFAVVIPPPNVTGSLHMGHALNNTIQDIMVRFERMRGKNVLWQPGIDHAGIATQMVVERQLAERKEPNRHAMGREKFIERIWQWKAESGGMISNQLRRLGASCDWSRERFTMDEGLSRAVLEVFVTLYKQGLIYRDKRLVNWDPKLLTAISDIEVESREIKGHLWHFRYPLENVPFDPENPHTYIIVATTRPETMLGDTGVAVNPKDERYHALVGNDVILPLVGRHIPIVADDYADPEAGSGAVKITPAHDFNDFEVGKRNNLRAINILTPEAAITLKDNVDFLEDLELTAELKALIVELDGMDRFAARKRIVELMDERGYLEKIDDHTHAVPHGDRGGVPIEPYLTDQWYVNAGELAKPAMAAVRDGRTQIVPKNWEKTYFDWMENIQPWCVSRQLWWGHQIPAWYGPDGHCFVEKSEAEAKAAARAHYGEDVALERDTDVLDTWFSSALWPFSTLGWPDKTPELATYYPTSVLVTGFDILFFWVARMMMMGLHFMEEIPFHTVYLHALVRDKHGAKMSKSKGNVIDPLELMDEYGADALRFTLAIMAAQGRDVKLDPARIAGYRNFGTKLWNATRFAQMNGVKLAPDFRPENAKLAVNRWILTELTRATRAVTEGIATYRFNEAAGAAYRFVWNQFCDWYLEFLKPIFMGDDEAAKAEAQATAAYCLDQVYKLLHPFMPFMTEELWSLTASEGKKRDTVLALAEWPELSFEDEDAAADINWLVDLVTGIRSVRAEMNVPAGAIAPVVVLDANKVTVDRFARHDAAIKRLARVERISFEQQAPKGAAQMLLGEATICIPLGSLIDLQAEAARLAKEAGKIAAEMDRIEKKLANEKFVANAREEVVEAERERLVELKEAAQRVATAESRIRDAS.

Residues 45–55 (PNVTGSLHMGH) carry the 'HIGH' region motif. Positions 554–558 (KMSKS) match the 'KMSKS' region motif. K557 contributes to the ATP binding site. Positions 842-910 (DLQAEAARLA…TAESRIRDAS (69 aa)) form a coiled coil.

Belongs to the class-I aminoacyl-tRNA synthetase family. ValS type 1 subfamily. Monomer.

It localises to the cytoplasm. It carries out the reaction tRNA(Val) + L-valine + ATP = L-valyl-tRNA(Val) + AMP + diphosphate. In terms of biological role, catalyzes the attachment of valine to tRNA(Val). As ValRS can inadvertently accommodate and process structurally similar amino acids such as threonine, to avoid such errors, it has a 'posttransfer' editing activity that hydrolyzes mischarged Thr-tRNA(Val) in a tRNA-dependent manner. The polypeptide is Valine--tRNA ligase (Brucella suis biovar 1 (strain 1330)).